The chain runs to 378 residues: Probable protein phosphatase 2C 55 (378 aa).

Disordered regions lie at residues Met-1–Gly-59 and Glu-79–Cys-115. Over residues Leu-7–Gly-26 the composition is skewed to low complexity. A compositionally biased stretch (basic residues) spans Gly-92–Pro-104. The PPM-type phosphatase domain occupies Ser-122 to Phe-369. Mn(2+)-binding residues include Asp-158, Gly-159, Asp-321, and Asp-360.

It belongs to the PP2C family. Mg(2+) serves as cofactor. Requires Mn(2+) as cofactor.

The catalysed reaction is O-phospho-L-seryl-[protein] + H2O = L-seryl-[protein] + phosphate. It carries out the reaction O-phospho-L-threonyl-[protein] + H2O = L-threonyl-[protein] + phosphate. This is Probable protein phosphatase 2C 55 from Oryza sativa subsp. japonica (Rice).